Here is a 152-residue protein sequence, read N- to C-terminus: D-aminoacyl-tRNA deacylase 1 (152 aa).

Positions 140 to 141 (GP) match the Gly-cisPro motif, important for rejection of L-amino acids motif.

Belongs to the DTD family. Homodimer.

It localises to the cytoplasm. It carries out the reaction glycyl-tRNA(Ala) + H2O = tRNA(Ala) + glycine + H(+). It catalyses the reaction a D-aminoacyl-tRNA + H2O = a tRNA + a D-alpha-amino acid + H(+). Functionally, an aminoacyl-tRNA editing enzyme that deacylates mischarged D-aminoacyl-tRNAs. Hydrolyzes correctly charged, achiral, glycyl-tRNA(Gly). Deacylates mischarged D.melanogaster and E.coli glycyl-tRNA(Ala), protecting cells against glycine mischarging by AlaRS. Acts via tRNA-based rather than protein-based catalysis; rejects L-amino acids rather than detecting D-amino acids in the active site. By recycling D-aminoacyl-tRNA to D-amino acids and free tRNA molecules, this enzyme counteracts the toxicity associated with the formation of D-aminoacyl-tRNA entities in vivo and helps enforce protein L-homochirality. The polypeptide is D-aminoacyl-tRNA deacylase 1 (dtd1) (Leishmania major).